Here is a 416-residue protein sequence, read N- to C-terminus: F-box/FBD/LRR-repeat protein At1g13570 (416 aa).

The F-box domain maps to 5–53 (PDFISDLPQSIIENILTRLSIRDAIRTSVLSSKWRYKWSTLTDLVFDEK). LRR repeat units follow at residues 115–142 (VLKL…ELCH), 164–189 (QILV…SLSY), 203–229 (MYLY…SVSM), 238–263 (FEQS…VGYI), and 294–321 (CFED…KVSA). Positions 346-384 (LPSLESVKITDASGIRYELEFIRFLLGTSPVLETVTVSS) constitute an FBD domain.

This is F-box/FBD/LRR-repeat protein At1g13570 from Arabidopsis thaliana (Mouse-ear cress).